The primary structure comprises 156 residues: Cytochrome c-type biogenesis protein CcmE 1 (156 aa).

Residues 1 to 8 (MNATRKQR) are Cytoplasmic-facing. Residues 9–29 (LWLVIGVLTAAALAVTLIALA) traverse the membrane as a helical; Signal-anchor for type II membrane protein segment. Topologically, residues 30-156 (LQRNMSYLFT…AAAAPLSGVR (127 aa)) are periplasmic. 2 residues coordinate heme: histidine 123 and tyrosine 127.

This sequence belongs to the CcmE/CycJ family.

The protein localises to the cell inner membrane. Functionally, heme chaperone required for the biogenesis of c-type cytochromes. Transiently binds heme delivered by CcmC and transfers the heme to apo-cytochromes in a process facilitated by CcmF and CcmH. The chain is Cytochrome c-type biogenesis protein CcmE 1 from Xanthomonas campestris pv. campestris (strain 8004).